A 386-amino-acid polypeptide reads, in one-letter code: Protein DOM34 (386 aa).

This sequence belongs to the eukaryotic release factor 1 family. Pelota subfamily. Monomer. Component of the Dom34-Hbs1 complex, also named Pelota-HBS1L complex, composed of DOM34 and HBS1. It depends on a divalent metal cation as a cofactor.

The protein resides in the cytoplasm. Component of the Dom34-Hbs1 complex, a complex that recognizes stalled ribosomes and triggers the No-Go Decay (NGD) pathway. In the Dom34-Hbs1 complex, DOM34 recognizes ribosomes stalled at the 3' end of an mRNA and engages stalled ribosomes by destabilizing mRNA in the mRNA channel. Following ribosome-binding, the Dom34-Hbs1 complex promotes the disassembly of stalled ribosomes, followed by degradation of damaged mRNAs as part of the NGD pathway. The Dom34-Hbs1 complex is also involved in non-functional rRNA decay. In Saccharomyces cerevisiae (strain ATCC 204508 / S288c) (Baker's yeast), this protein is Protein DOM34.